We begin with the raw amino-acid sequence, 152 residues long: Protein SprT-like (152 aa).

A SprT-like domain is found at 9–149; the sequence is LQKLTETISL…CGKCNGKLKE (141 aa). A Zn(2+)-binding site is contributed by H70. E71 is an active-site residue. H74 is a Zn(2+) binding site.

It belongs to the SprT family. The cofactor is Zn(2+).

The protein resides in the cytoplasm. The protein is Protein SprT-like of Staphylococcus saprophyticus subsp. saprophyticus (strain ATCC 15305 / DSM 20229 / NCIMB 8711 / NCTC 7292 / S-41).